Here is a 319-residue protein sequence, read N- to C-terminus: Phosphate acyltransferase (319 aa).

Belongs to the PlsX family. In terms of assembly, homodimer. Probably interacts with PlsY.

The protein localises to the cytoplasm. The enzyme catalyses a fatty acyl-[ACP] + phosphate = an acyl phosphate + holo-[ACP]. The protein operates within lipid metabolism; phospholipid metabolism. In terms of biological role, catalyzes the reversible formation of acyl-phosphate (acyl-PO(4)) from acyl-[acyl-carrier-protein] (acyl-ACP). This enzyme utilizes acyl-ACP as fatty acyl donor, but not acyl-CoA. The protein is Phosphate acyltransferase of Chlamydia muridarum (strain MoPn / Nigg).